A 418-amino-acid chain; its full sequence is Serine--tRNA ligase (418 aa).

L-serine is bound at residue 226-228; the sequence is TSE. ATP-binding positions include 257 to 259 and valine 273; that span reads RRE. Glutamate 280 lines the L-serine pocket. Position 344–347 (344–347) interacts with ATP; it reads ELTS. Threonine 379 contacts L-serine.

This sequence belongs to the class-II aminoacyl-tRNA synthetase family. Type-1 seryl-tRNA synthetase subfamily. In terms of assembly, homodimer. The tRNA molecule binds across the dimer.

It is found in the cytoplasm. It carries out the reaction tRNA(Ser) + L-serine + ATP = L-seryl-tRNA(Ser) + AMP + diphosphate + H(+). The enzyme catalyses tRNA(Sec) + L-serine + ATP = L-seryl-tRNA(Sec) + AMP + diphosphate + H(+). Its pathway is aminoacyl-tRNA biosynthesis; selenocysteinyl-tRNA(Sec) biosynthesis; L-seryl-tRNA(Sec) from L-serine and tRNA(Sec): step 1/1. Its function is as follows. Catalyzes the attachment of serine to tRNA(Ser). Is also able to aminoacylate tRNA(Sec) with serine, to form the misacylated tRNA L-seryl-tRNA(Sec), which will be further converted into selenocysteinyl-tRNA(Sec). The sequence is that of Serine--tRNA ligase from Mycobacteroides abscessus (strain ATCC 19977 / DSM 44196 / CCUG 20993 / CIP 104536 / JCM 13569 / NCTC 13031 / TMC 1543 / L948) (Mycobacterium abscessus).